A 484-amino-acid chain; its full sequence is MEIERKLLRLLHGHNTRTRLPEIHAHLLRHFLHGSNLLLAHFISICGSLSNSDYANRVFSHIQNPNVLVFNAMIKCYSLVGPPLESLSFFSSMKSRGIWADEYTYAPLLKSCSSLSDLRFGKCVHGELIRTGFHRLGKIRIGVVELYTSGGRMGDAQKVFDEMSERNVVVWNLMIRGFCDSGDVERGLHLFKQMSERSIVSWNSMISSLSKCGRDREALELFCEMIDQGFDPDEATVVTVLPISASLGVLDTGKWIHSTAESSGLFKDFITVGNALVDFYCKSGDLEAATAIFRKMQRRNVVSWNTLISGSAVNGKGEFGIDLFDAMIEEGKVAPNEATFLGVLACCSYTGQVERGEELFGLMMERFKLEARTEHYGAMVDLMSRSGRITEAFKFLKNMPVNANAAMWGSLLSACRSHGDVKLAEVAAMELVKIEPGNSGNYVLLSNLYAEEGRWQDVEKVRTLMKKNRLRKSTGQSTICDVSV.

PPR repeat units lie at residues 66-100 (NVLV…GIWA), 101-135 (DEYT…GFHR), 136-166 (LGKI…MSER), 167-197 (NVVV…MSER), 198-232 (SIVS…GFDP), 233-267 (DEAT…GLFK), 269-299 (FITV…MQRR), 300-334 (NVVS…GKVA), 336-366 (NEAT…MMER), and 372-406 (RTEH…ANAA). The interval 407–482 (MWGSLLSACR…STGQSTICDV (76 aa)) is type E motif.

Belongs to the PPR family. PCMP-E subfamily.

This Arabidopsis thaliana (Mouse-ear cress) protein is Pentatricopeptide repeat-containing protein At1g09190 (PCMP-E70).